The primary structure comprises 1234 residues: DNA-directed RNA polymerase subunit beta (1234 aa).

This sequence belongs to the RNA polymerase beta chain family. The RNAP catalytic core consists of 2 alpha, 1 beta, 1 beta' and 1 omega subunit. When a sigma factor is associated with the core the holoenzyme is formed, which can initiate transcription.

The enzyme catalyses RNA(n) + a ribonucleoside 5'-triphosphate = RNA(n+1) + diphosphate. Functionally, DNA-dependent RNA polymerase catalyzes the transcription of DNA into RNA using the four ribonucleoside triphosphates as substrates. This chain is DNA-directed RNA polymerase subunit beta, found in Clostridium perfringens (strain ATCC 13124 / DSM 756 / JCM 1290 / NCIMB 6125 / NCTC 8237 / Type A).